Consider the following 386-residue polypeptide: Succinate--CoA ligase [ADP-forming] subunit beta (386 aa).

The region spanning 9–244 (KDLLTSYAIP…PSQENVRDVL (236 aa)) is the ATP-grasp domain. Residues Lys46, 53–55 (GRG), Val102, and Glu107 contribute to the ATP site. Mg(2+) is bound by residues Asn199 and Asp213. Substrate contacts are provided by residues Asn264 and 321–323 (GIM).

This sequence belongs to the succinate/malate CoA ligase beta subunit family. As to quaternary structure, heterotetramer of two alpha and two beta subunits. Requires Mg(2+) as cofactor.

The catalysed reaction is succinate + ATP + CoA = succinyl-CoA + ADP + phosphate. It carries out the reaction GTP + succinate + CoA = succinyl-CoA + GDP + phosphate. It functions in the pathway carbohydrate metabolism; tricarboxylic acid cycle; succinate from succinyl-CoA (ligase route): step 1/1. Functionally, succinyl-CoA synthetase functions in the citric acid cycle (TCA), coupling the hydrolysis of succinyl-CoA to the synthesis of either ATP or GTP and thus represents the only step of substrate-level phosphorylation in the TCA. The beta subunit provides nucleotide specificity of the enzyme and binds the substrate succinate, while the binding sites for coenzyme A and phosphate are found in the alpha subunit. This chain is Succinate--CoA ligase [ADP-forming] subunit beta, found in Chlamydia abortus (strain DSM 27085 / S26/3) (Chlamydophila abortus).